The primary structure comprises 216 residues: Superoxide dismutase [Mn], mitochondrial (216 aa).

The transit peptide at 1–18 (MSFLNRNLSRTIKAAVRG) directs the protein to the mitochondrion. Residues H44, H92, D176, and H180 each coordinate Mn(2+).

It belongs to the iron/manganese superoxide dismutase family. Mn(2+) serves as cofactor.

The protein localises to the mitochondrion matrix. The catalysed reaction is 2 superoxide + 2 H(+) = H2O2 + O2. In terms of biological role, destroys superoxide anion radicals which are normally produced within the cells and which are toxic to biological systems. The sequence is that of Superoxide dismutase [Mn], mitochondrial (Sod2) from Glossina morsitans morsitans (Savannah tsetse fly).